Here is a 294-residue protein sequence, read N- to C-terminus: 4-hydroxy-tetrahydrodipicolinate synthase (294 aa).

Thr46 serves as a coordination point for pyruvate. The active-site Proton donor/acceptor is the Tyr134. Lys163 serves as the catalytic Schiff-base intermediate with substrate. Ile205 is a pyruvate binding site.

It belongs to the DapA family. As to quaternary structure, homotetramer; dimer of dimers.

The protein resides in the cytoplasm. It catalyses the reaction L-aspartate 4-semialdehyde + pyruvate = (2S,4S)-4-hydroxy-2,3,4,5-tetrahydrodipicolinate + H2O + H(+). The protein operates within amino-acid biosynthesis; L-lysine biosynthesis via DAP pathway; (S)-tetrahydrodipicolinate from L-aspartate: step 3/4. In terms of biological role, catalyzes the condensation of (S)-aspartate-beta-semialdehyde [(S)-ASA] and pyruvate to 4-hydroxy-tetrahydrodipicolinate (HTPA). The sequence is that of 4-hydroxy-tetrahydrodipicolinate synthase from Clostridium tetani (strain Massachusetts / E88).